Reading from the N-terminus, the 228-residue chain is Small ribosomal subunit protein uS3 (228 aa).

The 69-residue stretch at 39–107 folds into the KH type-2 domain; the sequence is IRKELNEKLK…PVNINIEEIK (69 aa).

It belongs to the universal ribosomal protein uS3 family. As to quaternary structure, part of the 30S ribosomal subunit. Forms a tight complex with proteins S10 and S14.

Its function is as follows. Binds the lower part of the 30S subunit head. Binds mRNA in the 70S ribosome, positioning it for translation. The sequence is that of Small ribosomal subunit protein uS3 from Hydrogenovibrio crunogenus (strain DSM 25203 / XCL-2) (Thiomicrospira crunogena).